Here is a 182-residue protein sequence, read N- to C-terminus: MPLSVEQALANFSQRYVEAWKEKHDSLPINEELVGLASPCIDETRNLEVLWQPVARDESIRLVNIENGIELDLHDDFHAFYGAQFSADMTAKFEGMNVELLQIWSDEDLENLQGNMLGHLVMQRRLKLVPTLFIAVTDDEMEVISICNQSGEVILDTVGTKKRKVLAESMAEFLEKLEPVVA.

The protein belongs to the Syd family.

The protein resides in the cell inner membrane. Functionally, interacts with the SecY protein in vivo. May bind preferentially to an uncomplexed state of SecY, thus functioning either as a chelating agent for excess SecY in the cell or as a regulatory factor that negatively controls the translocase function. This chain is Protein Syd, found in Aliivibrio salmonicida (strain LFI1238) (Vibrio salmonicida (strain LFI1238)).